Consider the following 217-residue polypeptide: Elongation factor Ts (217 aa).

The tract at residues 81 to 84 is involved in Mg(2+) ion dislocation from EF-Tu; sequence TDFV.

This sequence belongs to the EF-Ts family.

Its subcellular location is the cytoplasm. Associates with the EF-Tu.GDP complex and induces the exchange of GDP to GTP. It remains bound to the aminoacyl-tRNA.EF-Tu.GTP complex up to the GTP hydrolysis stage on the ribosome. This chain is Elongation factor Ts, found in Myxococcus xanthus (strain DK1622).